The following is a 694-amino-acid chain: Beta-mannosyltransferase 8 (694 aa).

Residues 1–11 (MKFPKLRKRTV) lie on the Cytoplasmic side of the membrane. The chain crosses the membrane as a helical span at residues 12-29 (YWAVLTVFALFTIHFVFQ). Residues 30 to 694 (YKEHNSHRVQ…YLYDHASVNS (665 aa)) are Extracellular-facing. 2 N-linked (GlcNAc...) asparagine glycosylation sites follow: N101 and N542.

It belongs to the BMT family.

Its subcellular location is the membrane. Its function is as follows. Beta-mannosyltransferase involved in cell wall biosynthesis through beta-1,2-mannosylation of cell wall phosphopeptidomannan. Plays a role in the ability to produce hyphae in the presence of three bacterial species. This is Beta-mannosyltransferase 8 (BMT8) from Candida albicans (strain SC5314 / ATCC MYA-2876) (Yeast).